The chain runs to 838 residues: G-protein coupled receptor-associated sorting protein 2 (838 aa).

Disordered regions lie at residues 1-121 (MTGA…PGAR), 218-293 (ASNE…NPFS), and 531-552 (LELSPEGEEQESLLQPDQPSPE). The span at 13–31 (KPEKKAGEEVVAGPEREND) shows a compositional bias: basic and acidic residues. The span at 220–235 (NESGFWSADETSTASS) shows a compositional bias: polar residues. Positions 255-271 (RSRHRAKHQTNPRSRPR) are enriched in basic residues. Phosphoserine occurs at positions 282 and 284. The span at 542 to 552 (SLLQPDQPSPE) shows a compositional bias: polar residues.

It belongs to the GPRASP family. Interacts with cytoplasmic tails of a variety of G protein-coupled receptors such as muscarinic acetylcholine receptor M1/CHRM1 and calcitonin receptor/CALCR.

In terms of biological role, may play a role in regulation of a variety of G-protein coupled receptors. The polypeptide is G-protein coupled receptor-associated sorting protein 2 (GPRASP2) (Pongo abelii (Sumatran orangutan)).